A 179-amino-acid chain; its full sequence is Bifunctional protein PyrR (179 aa).

The PRPP-binding motif lies at 99-111 (VILVDDVLYTGRT).

This sequence belongs to the purine/pyrimidine phosphoribosyltransferase family. PyrR subfamily. In terms of assembly, homodimer and homohexamer; in equilibrium.

The catalysed reaction is UMP + diphosphate = 5-phospho-alpha-D-ribose 1-diphosphate + uracil. Its function is as follows. Regulates transcriptional attenuation of the pyrimidine nucleotide (pyr) operon by binding in a uridine-dependent manner to specific sites on pyr mRNA. This disrupts an antiterminator hairpin in the RNA and favors formation of a downstream transcription terminator, leading to a reduced expression of downstream genes. Functionally, also displays a weak uracil phosphoribosyltransferase activity which is not physiologically significant. The sequence is that of Bifunctional protein PyrR from Brevibacillus brevis (strain 47 / JCM 6285 / NBRC 100599).